A 315-amino-acid chain; its full sequence is Methionyl-tRNA formyltransferase (315 aa).

Position 110–113 (110–113 (SLLP)) interacts with (6S)-5,6,7,8-tetrahydrofolate.

It belongs to the Fmt family.

The catalysed reaction is L-methionyl-tRNA(fMet) + (6R)-10-formyltetrahydrofolate = N-formyl-L-methionyl-tRNA(fMet) + (6S)-5,6,7,8-tetrahydrofolate + H(+). Functionally, attaches a formyl group to the free amino group of methionyl-tRNA(fMet). The formyl group appears to play a dual role in the initiator identity of N-formylmethionyl-tRNA by promoting its recognition by IF2 and preventing the misappropriation of this tRNA by the elongation apparatus. This is Methionyl-tRNA formyltransferase from Cutibacterium acnes (strain DSM 16379 / KPA171202) (Propionibacterium acnes).